Here is a 443-residue protein sequence, read N- to C-terminus: Type I restriction enzyme HindI methylase subunit (443 aa).

S-adenosyl-L-methionine is bound by residues 117–122 (QYFTPK), 146–148 (SGG), and Glu-173.

It belongs to the N(4)/N(6)-methyltransferase family. As to quaternary structure, the type I restriction/modification system is composed of three polypeptides R, M and S; the restriction enzyme has stoichiometry R(2)M(2)S(1) while the methyltransferase is M(2)S(1).

It carries out the reaction a 2'-deoxyadenosine in DNA + S-adenosyl-L-methionine = an N(6)-methyl-2'-deoxyadenosine in DNA + S-adenosyl-L-homocysteine + H(+). Functionally, the subtype gamma methyltransferase (M) subunit of a type I restriction enzyme. The M and S subunits together form a methyltransferase (MTase) that methylates adenosines in the sequence 5'-RAACN(5)TAG-3'. Methylation protects against cleavage by HindI. In the presence of the R subunit the complex can also act as an endonuclease, binding to the same target sequence but cutting the DNA some distance from this site. Whether the DNA is cut or modified depends on the methylation state of the target sequence. When the target site is unmodified, the DNA is cut. When the target site is hemimethylated, the complex acts as a maintenance MTase modifying the DNA so that both strands become methylated. After locating a non-methylated recognition site, the enzyme complex serves as a molecular motor that translocates DNA in an ATP-dependent manner until a collision occurs that triggers cleavage. The protein is Type I restriction enzyme HindI methylase subunit of Haemophilus influenzae (strain ATCC 51907 / DSM 11121 / KW20 / Rd).